The chain runs to 200 residues: ATP synthase subunit b 1 (200 aa).

Residues 14-34 (AAVIVVVSLMAFCCAGFAVAA) traverse the membrane as a helical segment.

This sequence belongs to the ATPase B chain family. In terms of assembly, F-type ATPases have 2 components, F(1) - the catalytic core - and F(0) - the membrane proton channel. F(1) has five subunits: alpha(3), beta(3), gamma(1), delta(1), epsilon(1). F(0) has three main subunits: a(1), b(2) and c(10-14). The alpha and beta chains form an alternating ring which encloses part of the gamma chain. F(1) is attached to F(0) by a central stalk formed by the gamma and epsilon chains, while a peripheral stalk is formed by the delta and b chains.

It is found in the cell inner membrane. In terms of biological role, f(1)F(0) ATP synthase produces ATP from ADP in the presence of a proton or sodium gradient. F-type ATPases consist of two structural domains, F(1) containing the extramembraneous catalytic core and F(0) containing the membrane proton channel, linked together by a central stalk and a peripheral stalk. During catalysis, ATP synthesis in the catalytic domain of F(1) is coupled via a rotary mechanism of the central stalk subunits to proton translocation. Component of the F(0) channel, it forms part of the peripheral stalk, linking F(1) to F(0). The chain is ATP synthase subunit b 1 from Desulfosudis oleivorans (strain DSM 6200 / JCM 39069 / Hxd3) (Desulfococcus oleovorans).